Here is a 614-residue protein sequence, read N- to C-terminus: Dihydroxy-acid dehydratase (614 aa).

Asp-81 serves as a coordination point for Mg(2+). Cys-122 contacts [2Fe-2S] cluster. Asp-123 and Lys-124 together coordinate Mg(2+). Lys-124 carries the post-translational modification N6-carboxylysine. Cys-193 provides a ligand contact to [2Fe-2S] cluster. Glu-489 provides a ligand contact to Mg(2+). Catalysis depends on Ser-515, which acts as the Proton acceptor.

This sequence belongs to the IlvD/Edd family. In terms of assembly, homodimer. Requires [2Fe-2S] cluster as cofactor. Mg(2+) is required as a cofactor.

It catalyses the reaction (2R)-2,3-dihydroxy-3-methylbutanoate = 3-methyl-2-oxobutanoate + H2O. The catalysed reaction is (2R,3R)-2,3-dihydroxy-3-methylpentanoate = (S)-3-methyl-2-oxopentanoate + H2O. Its pathway is amino-acid biosynthesis; L-isoleucine biosynthesis; L-isoleucine from 2-oxobutanoate: step 3/4. The protein operates within amino-acid biosynthesis; L-valine biosynthesis; L-valine from pyruvate: step 3/4. Its function is as follows. Functions in the biosynthesis of branched-chain amino acids. Catalyzes the dehydration of (2R,3R)-2,3-dihydroxy-3-methylpentanoate (2,3-dihydroxy-3-methylvalerate) into 2-oxo-3-methylpentanoate (2-oxo-3-methylvalerate) and of (2R)-2,3-dihydroxy-3-methylbutanoate (2,3-dihydroxyisovalerate) into 2-oxo-3-methylbutanoate (2-oxoisovalerate), the penultimate precursor to L-isoleucine and L-valine, respectively. The chain is Dihydroxy-acid dehydratase from Saccharophagus degradans (strain 2-40 / ATCC 43961 / DSM 17024).